A 183-amino-acid polypeptide reads, in one-letter code: ATP synthase subunit delta (183 aa).

Belongs to the ATPase delta chain family. F-type ATPases have 2 components, F(1) - the catalytic core - and F(0) - the membrane proton channel. F(1) has five subunits: alpha(3), beta(3), gamma(1), delta(1), epsilon(1). F(0) has three main subunits: a(1), b(2) and c(10-14). The alpha and beta chains form an alternating ring which encloses part of the gamma chain. F(1) is attached to F(0) by a central stalk formed by the gamma and epsilon chains, while a peripheral stalk is formed by the delta and b chains.

Its subcellular location is the cell inner membrane. In terms of biological role, f(1)F(0) ATP synthase produces ATP from ADP in the presence of a proton or sodium gradient. F-type ATPases consist of two structural domains, F(1) containing the extramembraneous catalytic core and F(0) containing the membrane proton channel, linked together by a central stalk and a peripheral stalk. During catalysis, ATP synthesis in the catalytic domain of F(1) is coupled via a rotary mechanism of the central stalk subunits to proton translocation. Its function is as follows. This protein is part of the stalk that links CF(0) to CF(1). It either transmits conformational changes from CF(0) to CF(1) or is implicated in proton conduction. The polypeptide is ATP synthase subunit delta (Maridesulfovibrio salexigens (strain ATCC 14822 / DSM 2638 / NCIMB 8403 / VKM B-1763) (Desulfovibrio salexigens)).